The sequence spans 437 residues: ATP-dependent protease ATPase subunit HslU (437 aa).

ATP contacts are provided by residues V18, 60-65 (GVGKTE), D249, E315, and R387.

Belongs to the ClpX chaperone family. HslU subfamily. A double ring-shaped homohexamer of HslV is capped on each side by a ring-shaped HslU homohexamer. The assembly of the HslU/HslV complex is dependent on binding of ATP.

It is found in the cytoplasm. ATPase subunit of a proteasome-like degradation complex; this subunit has chaperone activity. The binding of ATP and its subsequent hydrolysis by HslU are essential for unfolding of protein substrates subsequently hydrolyzed by HslV. HslU recognizes the N-terminal part of its protein substrates and unfolds these before they are guided to HslV for hydrolysis. The polypeptide is ATP-dependent protease ATPase subunit HslU (Rhodospirillum centenum (strain ATCC 51521 / SW)).